Here is a 315-residue protein sequence, read N- to C-terminus: Putative olfactory receptor 2I1 (315 aa).

The Extracellular segment spans residues M1–P24. A helical membrane pass occupies residues V25–A48. The Cytoplasmic portion of the chain corresponds to V49–T56. A helical transmembrane segment spans residues P57–P78. At P79 to Q99 the chain is on the extracellular side. C96 and C188 form a disulfide bridge. A helical transmembrane segment spans residues L100–L119. At D120 to R138 the chain is on the cytoplasmic side. The chain crosses the membrane as a helical span at residues L139–A157. At Q158–T195 the chain is on the extracellular side. Residues E196 to G219 traverse the membrane as a helical segment. Over A220–R236 the chain is Cytoplasmic. Residues A237–Y259 form a helical membrane-spanning segment. Over L260 to K272 the chain is Extracellular. Residues F273–L292 traverse the membrane as a helical segment. The Cytoplasmic portion of the chain corresponds to R293 to Q315.

It belongs to the G-protein coupled receptor 1 family.

It localises to the cell membrane. Odorant receptor. This is Putative olfactory receptor 2I1 from Homo sapiens (Human).